The primary structure comprises 400 residues: Proline-rich protein 5 (400 aa).

A disordered region spans residues 301-358 (TDSTSKLSMAGTKPPGEGERPPISNGQFPPLHNLSDSQQGLYNSQRDSPLLPAPSSSP). A compositionally biased stretch (polar residues) spans 334–347 (LSDSQQGLYNSQRD). Over residues 348–358 (SPLLPAPSSSP) the composition is skewed to low complexity.

This sequence belongs to the PROTOR family. As to quaternary structure, associated component of the mechanistic target of rapamycin complex 2 (mTORC2).

Its function is as follows. Associated subunit of mTORC2, which regulates cell growth and survival in response to hormonal signals. This Xenopus laevis (African clawed frog) protein is Proline-rich protein 5 (prr5).